Here is an 880-residue protein sequence, read N- to C-terminus: Valine--tRNA ligase (880 aa).

Residues 51–61 (PNVTGELHLGH) carry the 'HIGH' region motif. The 'KMSKS' region motif lies at 529-533 (KMSKT). K532 lines the ATP pocket. The stretch at 815 to 854 (MSTMVDLEAEAKRVEAEIAELETQIERLSARLSDTQFLAK) forms a coiled coil.

It belongs to the class-I aminoacyl-tRNA synthetase family. ValS type 1 subfamily. In terms of assembly, monomer.

It localises to the cytoplasm. It carries out the reaction tRNA(Val) + L-valine + ATP = L-valyl-tRNA(Val) + AMP + diphosphate. Functionally, catalyzes the attachment of valine to tRNA(Val). As ValRS can inadvertently accommodate and process structurally similar amino acids such as threonine, to avoid such errors, it has a 'posttransfer' editing activity that hydrolyzes mischarged Thr-tRNA(Val) in a tRNA-dependent manner. This Dehalococcoides mccartyi (strain ATCC BAA-2266 / KCTC 15142 / 195) (Dehalococcoides ethenogenes (strain 195)) protein is Valine--tRNA ligase.